The primary structure comprises 396 residues: Phosphoglycerate kinase (396 aa).

Residues 21 to 23 (DLN), arginine 36, 59 to 62 (HLGR), arginine 113, and arginine 146 contribute to the substrate site. ATP-binding positions include lysine 197, glutamate 319, and 345-348 (GGDT).

This sequence belongs to the phosphoglycerate kinase family. As to quaternary structure, monomer.

The protein localises to the cytoplasm. It carries out the reaction (2R)-3-phosphoglycerate + ATP = (2R)-3-phospho-glyceroyl phosphate + ADP. It functions in the pathway carbohydrate degradation; glycolysis; pyruvate from D-glyceraldehyde 3-phosphate: step 2/5. The sequence is that of Phosphoglycerate kinase from Legionella pneumophila (strain Corby).